Here is an 876-residue protein sequence, read N- to C-terminus: Alanine--tRNA ligase (876 aa).

The Zn(2+) site is built by H564, H568, C666, and H670.

The protein belongs to the class-II aminoacyl-tRNA synthetase family. As to quaternary structure, homotetramer. The cofactor is Zn(2+).

The protein localises to the cytoplasm. It catalyses the reaction tRNA(Ala) + L-alanine + ATP = L-alanyl-tRNA(Ala) + AMP + diphosphate. Functionally, catalyzes the attachment of alanine to tRNA(Ala) in a two-step reaction: alanine is first activated by ATP to form Ala-AMP and then transferred to the acceptor end of tRNA(Ala). Also edits incorrectly charged Ser-tRNA(Ala) and Gly-tRNA(Ala) via its editing domain. The chain is Alanine--tRNA ligase from Salmonella choleraesuis (strain SC-B67).